A 342-amino-acid polypeptide reads, in one-letter code: Protein-ribulosamine 3-kinase, chloroplastic (342 aa).

A chloroplast-targeting transit peptide spans 1 to 46 (MANVALLSAASPSTSSAAPRLRHVARRRPSRRSACPRSAASRLSIM). Residue 141–143 (EFI) participates in ATP binding. The Proton acceptor role is filled by aspartate 246.

This sequence belongs to the fructosamine kinase family.

It localises to the plastid. The protein resides in the chloroplast. The enzyme catalyses N(6)-D-ribulosyl-L-lysyl-[protein] + ATP = N(6)-(3-O-phospho-D-ribulosyl)-L-lysyl-[protein] + ADP + H(+). The catalysed reaction is N(6)-(D-erythrulosyl)-L-lysyl-[protein] + ATP = N(6)-(3-O-phospho-D-erythrulosyl)-L-lysyl-[protein] + ADP + H(+). Initiates a process leading to the deglycation of proteins. Phosphorylates low-molecular-mass and protein-bound erythrulosamines and ribulosamines, but not fructosamines or psicosamines, on the third carbon of the sugar moiety. Protein-bound erythrulosamine 3-phosphates and ribulosamine 3-phosphates are unstable and decompose under physiological conditions. The protein is Protein-ribulosamine 3-kinase, chloroplastic of Oryza sativa subsp. japonica (Rice).